A 475-amino-acid polypeptide reads, in one-letter code: 7-dehydrocholesterol reductase (475 aa).

Positions 1–21 (MAAKSQPNIPKAKSLDGVTND) are disordered. Position 14 is a phosphoserine (serine 14). 6 helical membrane passes run 40–60 (LASVIFLLLFAPFIVYYFIMA), 154–174 (THLLWFANAHLLSWFSPTIIF), 177–197 (WIPLLWCANILGYAVSTFAMV), 266–286 (VTNAMVLVNVLQAIYVIDFFW), 306–326 (LGWGDCVWLPYLYTLQGLYLV), and 331–351 (QLSTPHAVGVLLLGLVGYYIF). Residues lysine 358, arginine 362, leucine 395, tryptophan 400, and 407–408 (NY) each bind NADP(+). The chain crosses the membrane as a helical span at residues 420–440 (LACGGGHLLPYFYIIYMAILL). NADP(+)-binding positions include aspartate 447, 451-455 (CASKY), and tyrosine 462.

It belongs to the ERG4/ERG24 family. As to quaternary structure, interacts with DHCR24; this interaction regulates DHCR7 activity. Interacts with TMEM147. Widely expressed. Most abundant in adrenal gland, liver, testis, and brain.

It is found in the endoplasmic reticulum membrane. The enzyme catalyses cholesterol + NADP(+) = 7-dehydrocholesterol + NADPH + H(+). It carries out the reaction 7-dehydrodesmosterol + NADPH + H(+) = desmosterol + NADP(+). It catalyses the reaction 5,6alpha-epoxy-5alpha-cholestan-3beta-ol + H2O = 5alpha-cholestane-3beta,5,6beta-triol. The catalysed reaction is 5,6beta-epoxy-5beta-cholestan-3beta-ol + H2O = 5alpha-cholestane-3beta,5,6beta-triol. It functions in the pathway steroid biosynthesis; cholesterol biosynthesis. Its activity is regulated as follows. 7-DHC reductase and cholesterol-5,6-epoxide hydrolase (ChEH) activities are inhibited by tamoxifen and the selective AEBS ligand (4-benzyl-phenoxy)-ethyl-N-pyrrolidine (PBPE). ChEH activity is inhibited by oleic acid. Its function is as follows. Oxidoreductase that catalyzes the last step of the cholesterol synthesis pathway, which transforms cholesta-5,7-dien-3beta-ol (7-dehydrocholesterol,7-DHC) into cholesterol by reducing the C7-C8 double bond of its sterol core. Can also metabolize cholesta-5,7,24-trien-3beta-ol (7-dehydrodemosterol, 7-DHD) to desmosterol, which is then metabolized by the Delta(24)-sterol reductase (DHCR24) to cholesterol. Modulates ferroptosis (a form of regulated cell death driven by iron-dependent lipid peroxidation) through the metabolic breakdown of the anti-ferroptotic metabolites 7-DHC and 7-DHD which, when accumulated, divert the propagation of peroxyl radical-mediated damage from phospholipid components to its sterol core, protecting plasma and mitochondrial membranes from phospholipid autoxidation. Component of the microsomal antiestrogen binding site (AEBS), a multiproteic complex at the ER membrane that consists of an association between cholestenol Delta-isomerase/EBP and DHCR7. This complex is responsible for cholesterol-5,6-epoxide hydrolase (ChEH) activity, which consists in the hydration of cholesterol-5,6-epoxides (5,6-EC) into cholestane-3beta,5alpha,6beta-triol (CT). The precise role of each component of this complex has not been described yet. This is 7-dehydrocholesterol reductase from Homo sapiens (Human).